The chain runs to 194 residues: 7-methyl-GTP pyrophosphatase (194 aa).

D70 functions as the Proton acceptor in the catalytic mechanism.

Belongs to the Maf family. YceF subfamily. Requires a divalent metal cation as cofactor.

Its subcellular location is the cytoplasm. The enzyme catalyses N(7)-methyl-GTP + H2O = N(7)-methyl-GMP + diphosphate + H(+). In terms of biological role, nucleoside triphosphate pyrophosphatase that hydrolyzes 7-methyl-GTP (m(7)GTP). May have a dual role in cell division arrest and in preventing the incorporation of modified nucleotides into cellular nucleic acids. The polypeptide is 7-methyl-GTP pyrophosphatase (Vibrio vulnificus (strain CMCP6)).